A 307-amino-acid polypeptide reads, in one-letter code: Putative ankyrin repeat protein L59 (307 aa).

9 ANK repeats span residues 41 to 67, 68 to 97, 98 to 127, 129 to 157, 158 to 187, 188 to 217, 219 to 247, 248 to 277, and 279 to 307; these read LFNK…NLEK, IDNK…DTTN, HNYS…DIRA, DDEA…DVRN, RNDF…DIRT, DDDY…NIHA, GDSA…DIRI, DNDY…DIGA, and NNYA…LKLY.

The chain is Putative ankyrin repeat protein L59 from Acanthamoeba polyphaga (Amoeba).